A 117-amino-acid chain; its full sequence is uncharacterized protein (117 aa).

Transmembrane regions (helical) follow at residues 32–52 (VSSS…VTVV), 56–76 (VGVA…VTLL), and 87–107 (LSWC…SFFF).

The protein localises to the membrane. This is an uncharacterized protein from Saccharomyces cerevisiae (strain ATCC 204508 / S288c) (Baker's yeast).